The following is a 251-amino-acid chain: Octanoyltransferase (251 aa).

In terms of domain architecture, BPL/LPL catalytic spans 49 to 230 (DEIADQILVL…DLDDAFAGRL (182 aa)). Residues 87–94 (RGGRITWH), 160–162 (ALG), and 173–175 (GLA) each bind substrate. Catalysis depends on Cys191, which acts as the Acyl-thioester intermediate.

This sequence belongs to the LipB family.

It localises to the cytoplasm. It catalyses the reaction octanoyl-[ACP] + L-lysyl-[protein] = N(6)-octanoyl-L-lysyl-[protein] + holo-[ACP] + H(+). The protein operates within protein modification; protein lipoylation via endogenous pathway; protein N(6)-(lipoyl)lysine from octanoyl-[acyl-carrier-protein]: step 1/2. In terms of biological role, catalyzes the transfer of endogenously produced octanoic acid from octanoyl-acyl-carrier-protein onto the lipoyl domains of lipoate-dependent enzymes. Lipoyl-ACP can also act as a substrate although octanoyl-ACP is likely to be the physiological substrate. The polypeptide is Octanoyltransferase (Corynebacterium efficiens (strain DSM 44549 / YS-314 / AJ 12310 / JCM 11189 / NBRC 100395)).